The sequence spans 376 residues: Cytochrome b (376 aa).

A run of 4 helical transmembrane segments spans residues tyrosine 28 to serine 48, tryptophan 72 to leucine 94, serine 107 to valine 127, and phenylalanine 169 to phenylalanine 189. Heme b-binding residues include histidine 78 and histidine 92. Histidine 173 and histidine 187 together coordinate heme b. Histidine 192 is a binding site for a ubiquinone. Helical transmembrane passes span leucine 214–isoleucine 234, isoleucine 274–leucine 294, valine 317–proline 337, and isoleucine 340–leucine 360.

The protein belongs to the cytochrome b family. The main subunits of complex b-c1 are: cytochrome b, cytochrome c1 and the Rieske protein. Heme b serves as cofactor.

It localises to the mitochondrion inner membrane. Its function is as follows. Component of the ubiquinol-cytochrome c reductase complex (complex III or cytochrome b-c1 complex) that is part of the mitochondrial respiratory chain. The b-c1 complex mediates electron transfer from ubiquinol to cytochrome c. Contributes to the generation of a proton gradient across the mitochondrial membrane that is then used for ATP synthesis. The chain is Cytochrome b (MT-CYB) from Plasmodium chabaudi.